Reading from the N-terminus, the 314-residue chain is Methionyl-tRNA formyltransferase (314 aa).

(6S)-5,6,7,8-tetrahydrofolate is bound at residue S113 to P116.

Belongs to the Fmt family.

The enzyme catalyses L-methionyl-tRNA(fMet) + (6R)-10-formyltetrahydrofolate = N-formyl-L-methionyl-tRNA(fMet) + (6S)-5,6,7,8-tetrahydrofolate + H(+). Functionally, attaches a formyl group to the free amino group of methionyl-tRNA(fMet). The formyl group appears to play a dual role in the initiator identity of N-formylmethionyl-tRNA by promoting its recognition by IF2 and preventing the misappropriation of this tRNA by the elongation apparatus. The chain is Methionyl-tRNA formyltransferase from Stutzerimonas stutzeri (strain A1501) (Pseudomonas stutzeri).